The chain runs to 929 residues: Protein translocase subunit SecA (929 aa).

Residues Q83, 101-105 (GEGKT), and D491 each bind ATP.

Belongs to the SecA family. Monomer and homodimer. Part of the essential Sec protein translocation apparatus which comprises SecA, SecYEG and auxiliary proteins SecDF. Other proteins may also be involved.

Its subcellular location is the cell inner membrane. It is found in the cellular thylakoid membrane. The protein localises to the cytoplasm. It carries out the reaction ATP + H2O + cellular proteinSide 1 = ADP + phosphate + cellular proteinSide 2.. Part of the Sec protein translocase complex. Interacts with the SecYEG preprotein conducting channel. Has a central role in coupling the hydrolysis of ATP to the transfer of proteins into and across the cell membrane, serving as an ATP-driven molecular motor driving the stepwise translocation of polypeptide chains across the membrane. In terms of biological role, probably participates in protein translocation into and across both the cytoplasmic and thylakoid membranes in cyanobacterial cells. The protein is Protein translocase subunit SecA of Thermosynechococcus vestitus (strain NIES-2133 / IAM M-273 / BP-1).